The chain runs to 180 residues: Molybdopterin synthase catalytic subunit (180 aa).

The span at 1–10 (MSSTTPTTEP) shows a compositional bias: polar residues. Residues 1-31 (MSSTTPTTEPDQLPPHLDPQTYPRTTTNPTL) are disordered. Residues 21–31 (TYPRTTTNPTL) are compositionally biased toward low complexity. Substrate-binding positions include 131 to 132 (HR), K147, and 154 to 156 (KKE).

This sequence belongs to the MoaE family. MOCS2B subfamily. In terms of assembly, heterotetramer; composed of 2 small (MOCS2A) and 2 large (MOCS2B) subunits.

It localises to the cytoplasm. It catalyses the reaction 2 [molybdopterin-synthase sulfur-carrier protein]-C-terminal-Gly-aminoethanethioate + cyclic pyranopterin phosphate + H2O = molybdopterin + 2 [molybdopterin-synthase sulfur-carrier protein]-C-terminal Gly-Gly + 2 H(+). It functions in the pathway cofactor biosynthesis; molybdopterin biosynthesis. Functionally, catalytic subunit of the molybdopterin synthase complex, a complex that catalyzes the conversion of precursor Z into molybdopterin. Acts by mediating the incorporation of 2 sulfur atoms from thiocarboxylated MOCS2A into precursor Z to generate a dithiolene group. This Aspergillus niger (strain ATCC MYA-4892 / CBS 513.88 / FGSC A1513) protein is Molybdopterin synthase catalytic subunit.